The following is a 395-amino-acid chain: Acetylornithine aminotransferase (395 aa).

Pyridoxal 5'-phosphate-binding positions include 117–118 and phenylalanine 144; that span reads GA. Arginine 147 contacts N(2)-acetyl-L-ornithine. 230-233 contributes to the pyridoxal 5'-phosphate binding site; the sequence is DEVQ. Lysine 259 bears the N6-(pyridoxal phosphate)lysine mark. Serine 285 provides a ligand contact to N(2)-acetyl-L-ornithine. Threonine 286 is a binding site for pyridoxal 5'-phosphate.

It belongs to the class-III pyridoxal-phosphate-dependent aminotransferase family. ArgD subfamily. Homodimer. Requires pyridoxal 5'-phosphate as cofactor.

It localises to the cytoplasm. It catalyses the reaction N(2)-acetyl-L-ornithine + 2-oxoglutarate = N-acetyl-L-glutamate 5-semialdehyde + L-glutamate. It functions in the pathway amino-acid biosynthesis; L-arginine biosynthesis; N(2)-acetyl-L-ornithine from L-glutamate: step 4/4. The protein is Acetylornithine aminotransferase of Methanosarcina acetivorans (strain ATCC 35395 / DSM 2834 / JCM 12185 / C2A).